Consider the following 219-residue polypeptide: Thiamine-phosphate synthase (219 aa).

4-amino-2-methyl-5-(diphosphooxymethyl)pyrimidine-binding positions include 44–48 and N79; that span reads QLREK. Residues D80 and D99 each coordinate Mg(2+). Residue S117 participates in 4-amino-2-methyl-5-(diphosphooxymethyl)pyrimidine binding. 2-[(2R,5Z)-2-carboxy-4-methylthiazol-5(2H)-ylidene]ethyl phosphate is bound at residue 143 to 145; it reads TST. Residue K146 coordinates 4-amino-2-methyl-5-(diphosphooxymethyl)pyrimidine. Residues G175 and 195–196 each bind 2-[(2R,5Z)-2-carboxy-4-methylthiazol-5(2H)-ylidene]ethyl phosphate; that span reads IS.

The protein belongs to the thiamine-phosphate synthase family. Mg(2+) is required as a cofactor.

The enzyme catalyses 2-[(2R,5Z)-2-carboxy-4-methylthiazol-5(2H)-ylidene]ethyl phosphate + 4-amino-2-methyl-5-(diphosphooxymethyl)pyrimidine + 2 H(+) = thiamine phosphate + CO2 + diphosphate. It catalyses the reaction 2-(2-carboxy-4-methylthiazol-5-yl)ethyl phosphate + 4-amino-2-methyl-5-(diphosphooxymethyl)pyrimidine + 2 H(+) = thiamine phosphate + CO2 + diphosphate. The catalysed reaction is 4-methyl-5-(2-phosphooxyethyl)-thiazole + 4-amino-2-methyl-5-(diphosphooxymethyl)pyrimidine + H(+) = thiamine phosphate + diphosphate. It functions in the pathway cofactor biosynthesis; thiamine diphosphate biosynthesis; thiamine phosphate from 4-amino-2-methyl-5-diphosphomethylpyrimidine and 4-methyl-5-(2-phosphoethyl)-thiazole: step 1/1. Its function is as follows. Condenses 4-methyl-5-(beta-hydroxyethyl)thiazole monophosphate (THZ-P) and 2-methyl-4-amino-5-hydroxymethyl pyrimidine pyrophosphate (HMP-PP) to form thiamine monophosphate (TMP). The polypeptide is Thiamine-phosphate synthase (Bacillus mycoides (strain KBAB4) (Bacillus weihenstephanensis)).